Here is a 114-residue protein sequence, read N- to C-terminus: Iron-sulfur cluster insertion protein ErpA (114 aa).

Iron-sulfur cluster contacts are provided by cysteine 42, cysteine 106, and cysteine 108.

Belongs to the HesB/IscA family. As to quaternary structure, homodimer. Requires iron-sulfur cluster as cofactor.

Required for insertion of 4Fe-4S clusters for at least IspG. This chain is Iron-sulfur cluster insertion protein ErpA, found in Cronobacter sakazakii (strain ATCC BAA-894) (Enterobacter sakazakii).